We begin with the raw amino-acid sequence, 1299 residues long: Probable membrane antigen 75 (1299 aa).

It is found in the virion tegument. This Saimiriine herpesvirus 2 (strain 11) (SaHV-2) protein is Probable membrane antigen 75 (75).